Here is a 408-residue protein sequence, read N- to C-terminus: Peptidase T (408 aa).

A Zn(2+)-binding site is contributed by His78. Residue Asp80 is part of the active site. Asp140 is a Zn(2+) binding site. Residue Glu173 is the Proton acceptor of the active site. Residues Glu174, Asp196, and His379 each contribute to the Zn(2+) site.

This sequence belongs to the peptidase M20B family. Zn(2+) is required as a cofactor.

The protein localises to the cytoplasm. It catalyses the reaction Release of the N-terminal residue from a tripeptide.. Functionally, cleaves the N-terminal amino acid of tripeptides. In Shigella boydii serotype 18 (strain CDC 3083-94 / BS512), this protein is Peptidase T.